We begin with the raw amino-acid sequence, 142 residues long: Large ribosomal subunit protein uL11 (142 aa).

Position 2 is a n,N,N-trimethylalanine (alanine 2). N6,N6,N6-trimethyllysine is present on residues lysine 4 and lysine 40.

The protein belongs to the universal ribosomal protein uL11 family. In terms of assembly, part of the ribosomal stalk of the 50S ribosomal subunit. Interacts with L10 and the large rRNA to form the base of the stalk. L10 forms an elongated spine to which L12 dimers bind in a sequential fashion forming a multimeric L10(L12)X complex. Post-translationally, one or more lysine residues are methylated.

In terms of biological role, forms part of the ribosomal stalk which helps the ribosome interact with GTP-bound translation factors. This Shigella flexneri protein is Large ribosomal subunit protein uL11.